Reading from the N-terminus, the 209-residue chain is ATP-dependent Clp protease proteolytic subunit 2 (209 aa).

The Nucleophile role is filled by serine 106. Histidine 131 is an active-site residue.

It belongs to the peptidase S14 family. In terms of assembly, fourteen ClpP subunits assemble into 2 heptameric rings which stack back to back to give a disk-like structure with a central cavity, resembling the structure of eukaryotic proteasomes.

It localises to the cytoplasm. It carries out the reaction Hydrolysis of proteins to small peptides in the presence of ATP and magnesium. alpha-casein is the usual test substrate. In the absence of ATP, only oligopeptides shorter than five residues are hydrolyzed (such as succinyl-Leu-Tyr-|-NHMec, and Leu-Tyr-Leu-|-Tyr-Trp, in which cleavage of the -Tyr-|-Leu- and -Tyr-|-Trp bonds also occurs).. In terms of biological role, cleaves peptides in various proteins in a process that requires ATP hydrolysis. Has a chymotrypsin-like activity. Plays a major role in the degradation of misfolded proteins. The sequence is that of ATP-dependent Clp protease proteolytic subunit 2 from Rhizobium etli (strain ATCC 51251 / DSM 11541 / JCM 21823 / NBRC 15573 / CFN 42).